The following is a 638-amino-acid chain: Homeobox protein 10 (638 aa).

Disordered stretches follow at residues 23–55, 76–139, and 195–219; these read ETQPTTPTTQPTTPTTNTISTTTNTITSTLNTN, TDEN…VNTN, and IANEDKESLPEPQTNSNVNGNEEAK. Composition is skewed to low complexity over residues 24 to 55 and 80 to 139; these read TQPTTPTTQPTTPTTNTISTTTNTITSTLNTN and NTSV…VNTN. Over residues 205-214 the composition is skewed to polar residues; the sequence is EPQTNSNVNG. The segment at residues 301–360 is a DNA-binding region (homeobox); sequence NKKKRQRTSPEQLAILEQIFETDKMPSQQIRVRLANQLGMSSRRVQIWFQNKRAKVKRGG. Disordered regions lie at residues 381–431 and 448–638; these read EDED…TSSD and SSSS…IVKN. 3 stretches are compositionally biased toward low complexity: residues 388–411, 419–430, and 462–501; these read SLTIDESGNNNNNSGNNNNNNNNG, LSSSPTNLNTSS, and NNTNNNNNNNNNNNNNNNNNNNNNNNHTTTTTTTTTTTTT. Composition is skewed to polar residues over residues 502 to 522 and 545 to 573; these read SSSPPLTSFNFQLNQSLNKLT and SLNSTASSLPSFPQIKLNSSSKHIPTDKQ. Positions 575-625 are enriched in low complexity; the sequence is NSDFSNFNNNNNNNNNNNNNNNNNNNINNNGNNNSNNNDSNNNNNKSNFSD.

It localises to the nucleus. Functionally, putative transcription factor. In Dictyostelium discoideum (Social amoeba), this protein is Homeobox protein 10 (hbx10).